The sequence spans 256 residues: Thiazole synthase (256 aa).

Lysine 95 acts as the Schiff-base intermediate with DXP in catalysis. 1-deoxy-D-xylulose 5-phosphate contacts are provided by residues glycine 156, 182 to 183 (AG), and 204 to 205 (NT).

The protein belongs to the ThiG family. As to quaternary structure, homotetramer. Forms heterodimers with either ThiH or ThiS.

The protein localises to the cytoplasm. The enzyme catalyses [ThiS sulfur-carrier protein]-C-terminal-Gly-aminoethanethioate + 2-iminoacetate + 1-deoxy-D-xylulose 5-phosphate = [ThiS sulfur-carrier protein]-C-terminal Gly-Gly + 2-[(2R,5Z)-2-carboxy-4-methylthiazol-5(2H)-ylidene]ethyl phosphate + 2 H2O + H(+). Its pathway is cofactor biosynthesis; thiamine diphosphate biosynthesis. In terms of biological role, catalyzes the rearrangement of 1-deoxy-D-xylulose 5-phosphate (DXP) to produce the thiazole phosphate moiety of thiamine. Sulfur is provided by the thiocarboxylate moiety of the carrier protein ThiS. In vitro, sulfur can be provided by H(2)S. This is Thiazole synthase from Escherichia coli O157:H7.